A 254-amino-acid chain; its full sequence is Alcohol dehydrogenase (254 aa).

10 to 33 lines the NAD(+) pocket; that stretch reads FVAGLGGIGLDTSREIVKSGPKNL. Residue Ser-138 coordinates substrate. Tyr-151 acts as the Proton acceptor in catalysis.

It belongs to the short-chain dehydrogenases/reductases (SDR) family. In terms of assembly, homodimer.

It catalyses the reaction a primary alcohol + NAD(+) = an aldehyde + NADH + H(+). The enzyme catalyses a secondary alcohol + NAD(+) = a ketone + NADH + H(+). The chain is Alcohol dehydrogenase (Adh) from Drosophila affinidisjuncta (Fruit fly).